The sequence spans 126 residues: Penton protein P31 (126 aa).

It is found in the virion. Functionally, in association with P2 and trimeric P5, forms the spike complexes located at the 5-fold vertices of the capsid. Essential for viral infectivity. This Acinetobacter calcoaceticus (Arthrobacter siderocapsulatus) protein is Penton protein P31 (XXXI).